The following is a 196-amino-acid chain: Elongation factor Ts (196 aa).

Residues 80–83 (TDFV) are involved in Mg(2+) ion dislocation from EF-Tu.

Belongs to the EF-Ts family. As to quaternary structure, heterotetramer composed of two EF-Ts.EF-Tu dimer complexes.

It is found in the cytoplasm. Functionally, associates with the EF-Tu.GDP complex and induces the exchange of GDP to GTP. It remains bound to the aminoacyl-tRNA.EF-Tu.GTP complex up to the GTP hydrolysis stage on the ribosome. The protein is Elongation factor Ts (tsf) of Thermus thermophilus (strain ATCC 27634 / DSM 579 / HB8).